The following is a 798-amino-acid chain: General transcription and DNA repair factor IIH helicase/translocase subunit XPB (798 aa).

2 disordered regions span residues 1-62 (MGPP…EQIN) and 235-254 (PPGA…GADG). The short motif at 6 to 22 (KSRKDRSGGDKFGKKRR) is the Nuclear localization signal element. Basic and acidic residues predominate over residues 10 to 25 (DRSGGDKFGKKRRAED). A compositionally biased stretch (acidic residues) spans 33–42 (DDNDSLDATE). The Helicase ATP-binding domain maps to 343-504 (MFGNGRARSG…DLNFLIGPKL (162 aa)). 360–367 (AGKSLVGV) contacts ATP. Residues 457-460 (DEVH) carry the DEVH box motif. The 156-residue stretch at 558–713 (RSCQFLIKYH…KVITHLKGMD (156 aa)) folds into the Helicase C-terminal domain. The tract at residues 746 to 765 (LPGEPGYRPSGSGGAVRRVG) is disordered.

It belongs to the helicase family. RAD25/XPB subfamily. In terms of assembly, component of the 7-subunit TFIIH core complex composed of haywire/XPB/ERCC3, XPD/ERCC2, GTF2H1, GTF2H2, GTF2H3, GTF2H4 and GTF2H5, which is active in NER. The core complex associates with the 3-subunit CDK-activating kinase (CAK) module composed of CCNH/cyclin H, CDK7 and MNAT1 to form the 10-subunit holoenzyme (holo-TFIIH) active in transcription. Interacts with PUF60. Interacts with ATF7IP. Interacts with Epstein-Barr virus EBNA2.

It localises to the nucleus. It carries out the reaction Couples ATP hydrolysis with the unwinding of duplex DNA by translocating in the 3'-5' direction.. The enzyme catalyses ATP + H2O = ADP + phosphate + H(+). Its function is as follows. ATP-dependent 3'-5' DNA helicase/translocase; binds dsDNA rather than ssDNA, unzipping it in a translocase rather than classical helicase activity. Component of the general transcription and DNA repair factor IIH (TFIIH) core complex. When complexed to CDK-activating kinase (CAK), involved in RNA transcription by RNA polymerase II. The ATPase activity of XPB/ERCC3, but not its helicase activity, is required for DNA opening; it may wrap around the damaged DNA wedging it open, causing localized melting and twisting that allows XPD/ERCC2 helicase to anchor. The ATP-dependent helicase activity of XPB/ERCC3 may be required for promoter escape. Also involved in transcription-coupled nucleotide excision repair (NER) of damaged DNA. In NER, TFIIH acts by opening DNA around the lesion to allow the excision of the damaged oligonucleotide and its replacement by a new DNA fragment. The structure of the TFIIH transcription complex differs from the NER-TFIIH complex; large movements by XPD/ERCC2 and XPB/ERCC3 are stabilized by XPA. This chain is General transcription and DNA repair factor IIH helicase/translocase subunit XPB (hay), found in Drosophila melanogaster (Fruit fly).